Here is a 246-residue protein sequence, read N- to C-terminus: Homeobox protein Crxos (246 aa).

DNA-binding regions (homeobox) lie at residues 22 to 72 (WEQL…EMRP) and 129 to 182 (ELTD…RGYR). The Nuclear localization signal signature appears at 163–177 (RKDLIRSWFITQRHR).

This sequence belongs to the paired homeobox family. Specifically expressed during the preimplantation stages of embryonic development, between the four-cell to eight-cell stage and the morula stage. Expressed in adult testis. In terms of tissue distribution, detected in early embryos; expression decreases gradually with embryonic development. Also expressed in extraembryonic tissues after E14.5, expression level increases drastically until E18.5, immediately before partum.

The protein localises to the nucleus. In terms of biological role, transcription factor that acts as a regulator of embryonic stem cell differentiation during the preimplantation stages of embryonic development. Functionally, transcription factor that acts as a positive regulator of embryonic stem cell differentiation. Transcription factor that promotes embryonic stem cell pluripotency. Its function is as follows. Transcription factor that promotes embryonic stem cell pluripotency. Also involved in extraembryonic tissues development by promoting the expression of placental prolactin family genes. The polypeptide is Homeobox protein Crxos (Mus musculus (Mouse)).